Reading from the N-terminus, the 301-residue chain is Recombination-associated protein RdgC (301 aa).

The protein belongs to the RdgC family.

It localises to the cytoplasm. Its subcellular location is the nucleoid. Its function is as follows. May be involved in recombination. The sequence is that of Recombination-associated protein RdgC from Pseudoalteromonas atlantica (strain T6c / ATCC BAA-1087).